The following is a 1408-amino-acid chain: Protein patched homolog 1 (1408 aa).

The disordered stretch occupies residues 1–20 (MLTLLEPPGAKRSPTVGNYN). The Cytoplasmic segment spans residues 1–136 (MLTLLEPPGA…GNTVHRNAWS (136 aa)). A helical transmembrane segment spans residues 137–157 (IILAVSMIFAVCCYGLQYVHI). Over 158-649 (ETDIVKLWVA…STSIADMLEE (492 aa)) the chain is Extracellular. A disordered region spans residues 455–479 (STAPIPTTTTLSPEEARAAEEKEKK). Basic and acidic residues predominate over residues 468 to 479 (EEARAAEEKEKK). Asn599 is a glycosylation site (N-linked (GlcNAc...) asparagine). The chain crosses the membrane as a helical span at residues 650-670 (FCQFNYTIILAGYALMLAYAI). Positions 654–816 (NYTIILAGYA…LTIYPAIISI (163 aa)) constitute an SSD domain. Residues 671 to 686 (VTQARFDNCLPATESS) are Cytoplasmic-facing. The chain crosses the membrane as a helical span at residues 687–707 (MGLALAGVLVVTFASVAGLGL). Residues 708-709 (AT) lie on the Extracellular side of the membrane. The chain crosses the membrane as a helical span at residues 710–730 (WFGIEFNAATTQIVPFLTLGI). Over 731–765 (GVDNMFMLLHNYRDVVKLAGGHAEMAILMRETGMS) the chain is Cytoplasmic. A helical membrane pass occupies residues 766 to 786 (ILCTSINNILSFLTGTLLPIP). At 787 to 795 (ALRSFCAQS) the chain is on the extracellular side. The helical transmembrane segment at 796–816 (SILLTFNFIAILTIYPAIISI) threads the bilayer. Residues 817–901 (DLRRKKAQRR…YYYIPFISKP (85 aa)) lie on the Cytoplasmic side of the membrane. Residues 902 to 922 (ASKVAIIVGCCALLGASFIGM) form a helical membrane-spanning segment. Residues 923–1175 (RQSTLGLELG…QGIAFTFWEQ (253 aa)) lie on the Extracellular side of the membrane. Asn1026 and Asn1036 each carry an N-linked (GlcNAc...) asparagine glycan. A helical membrane pass occupies residues 1176–1196 (YLFLTGNLMQAISIITISVFC). Over 1197 to 1217 (VISVLLFNPWAALMVVCILGI) the chain is Cytoplasmic. Transmembrane regions (helical) follow at residues 1218–1238 (MTCE…PVSA) and 1239–1259 (VTLI…VVSF). The Extracellular portion of the chain corresponds to 1260–1276 (LTALGTRSQRTSSAVDR). A helical transmembrane segment spans residues 1277-1297 (VFVPVIHGSFSTLLGILMLGF). At 1298–1305 (SEFEFVVK) the chain is on the cytoplasmic side. The chain crosses the membrane as a helical span at residues 1306 to 1326 (YFFIVMTALICIGIINGLILL). At 1327-1408 (PVLLSWFGPR…GNNTRRLPAV (82 aa)) the chain is on the extracellular side. Residues 1342–1408 (TGGKTTLTLP…GNNTRRLPAV (67 aa)) are disordered. A compositionally biased stretch (low complexity) spans 1387–1408 (TTRTSGGNRGTVGNNTRRLPAV).

This sequence belongs to the patched family. Germ line and its progenitors.

Its subcellular location is the membrane. Functionally, required but not essential for cytokinesis of mitotically proliferating germ cells. In Caenorhabditis elegans, this protein is Protein patched homolog 1 (ptc-1).